We begin with the raw amino-acid sequence, 666 residues long: Translation factor guf1, mitochondrial (666 aa).

The transit peptide at 1 to 44 (MRGCLQLGRWLSAAPRCQAASLRPPTVFPSYRYNRSFSTTTIYY) directs the protein to the mitochondrion. A tr-type G domain is found at 68–248 (ERFRNFCIVA…TVVEKVPAPI (181 aa)). Residues 77 to 84 (AHVDHGKS), 141 to 145 (DTPGH), and 195 to 198 (NKVD) contribute to the GTP site.

The protein belongs to the TRAFAC class translation factor GTPase superfamily. Classic translation factor GTPase family. LepA subfamily.

The protein localises to the mitochondrion inner membrane. The enzyme catalyses GTP + H2O = GDP + phosphate + H(+). Promotes mitochondrial protein synthesis. May act as a fidelity factor of the translation reaction, by catalyzing a one-codon backward translocation of tRNAs on improperly translocated ribosomes. Binds to mitochondrial ribosomes in a GTP-dependent manner. This chain is Translation factor guf1, mitochondrial (guf1), found in Penicillium rubens (strain ATCC 28089 / DSM 1075 / NRRL 1951 / Wisconsin 54-1255) (Penicillium chrysogenum).